A 467-amino-acid polypeptide reads, in one-letter code: Asparagine--tRNA ligase (467 aa).

This sequence belongs to the class-II aminoacyl-tRNA synthetase family. In terms of assembly, homodimer.

The protein resides in the cytoplasm. It carries out the reaction tRNA(Asn) + L-asparagine + ATP = L-asparaginyl-tRNA(Asn) + AMP + diphosphate + H(+). The polypeptide is Asparagine--tRNA ligase (Bacteroides fragilis (strain YCH46)).